Consider the following 239-residue polypeptide: MMDKEIENGSVNVDLLELEKFNQLAHRWWDPNSEFKPLHEINPLRLGYIDRHARLAGKDVLDVGCGGGILSESMAESGAQVTGIDLGDKALKVAKLHLLESGNKVNYRKSSVEALAAEQPHHYDVVTCMEMLEHVPDPVSTVRACAELAKPGGWVFFSTINRNPKSYLFAVIGAEYVLNLLPRGTHDYAKFIKPSELGRMAREAGLDVQEVIGMSYNPITKVYSLGQDTDVNYIMAFRA.

R45, G64, D85, and M129 together coordinate S-adenosyl-L-methionine.

Belongs to the methyltransferase superfamily. UbiG/COQ3 family.

It carries out the reaction a 3-demethylubiquinol + S-adenosyl-L-methionine = a ubiquinol + S-adenosyl-L-homocysteine + H(+). The catalysed reaction is a 3-(all-trans-polyprenyl)benzene-1,2-diol + S-adenosyl-L-methionine = a 2-methoxy-6-(all-trans-polyprenyl)phenol + S-adenosyl-L-homocysteine + H(+). The protein operates within cofactor biosynthesis; ubiquinone biosynthesis. In terms of biological role, O-methyltransferase that catalyzes the 2 O-methylation steps in the ubiquinone biosynthetic pathway. In Nitrosospira multiformis (strain ATCC 25196 / NCIMB 11849 / C 71), this protein is Ubiquinone biosynthesis O-methyltransferase.